A 181-amino-acid polypeptide reads, in one-letter code: Large ribosomal subunit protein uL5 (181 aa).

Belongs to the universal ribosomal protein uL5 family. In terms of assembly, part of the 50S ribosomal subunit; part of the 5S rRNA/L5/L18/L25 subcomplex. Contacts the 5S rRNA and the P site tRNA. Forms a bridge to the 30S subunit in the 70S ribosome.

Functionally, this is one of the proteins that bind and probably mediate the attachment of the 5S RNA into the large ribosomal subunit, where it forms part of the central protuberance. In the 70S ribosome it contacts protein S13 of the 30S subunit (bridge B1b), connecting the 2 subunits; this bridge is implicated in subunit movement. Contacts the P site tRNA; the 5S rRNA and some of its associated proteins might help stabilize positioning of ribosome-bound tRNAs. This chain is Large ribosomal subunit protein uL5, found in Thermosipho africanus (strain TCF52B).